Consider the following 1083-residue polypeptide: Ubiquitin carboxyl-terminal hydrolase 1 (1083 aa).

The UBP-type zinc finger occupies 30–165 (RSCVHFDKYV…KKDLLLEVVK (136 aa)). Residues Cys-32, His-34, Cys-56, Cys-59, Cys-95, Cys-98, Cys-103, His-115, His-119, His-125, Cys-139, and Cys-142 each contribute to the Zn(2+) site. The USP domain maps to 202–1083 (RGLVNLGNTC…EAYILFYERI (882 aa)). The Nucleophile role is filled by Cys-211. Disordered stretches follow at residues 387 to 424 (KDSEVVSAKPASDHNSTVPLFPSDHKIQSRPETSDNET) and 450 to 486 (GSTETLMHDNDRTGKTVPDKEDVRATQSNEETSASGI). Composition is skewed to basic and acidic residues over residues 409-419 (SDHKIQSRPET) and 455-473 (LMHDNDRTGKTVPDKEDVR). Positions 474–485 (ATQSNEETSASG) are enriched in polar residues. The active-site Proton acceptor is His-1029.

It belongs to the peptidase C19 family.

The catalysed reaction is Thiol-dependent hydrolysis of ester, thioester, amide, peptide and isopeptide bonds formed by the C-terminal Gly of ubiquitin (a 76-residue protein attached to proteins as an intracellular targeting signal).. In terms of biological role, recognizes and hydrolyzes the peptide bond at the C-terminal Gly of ubiquitin. Involved in the processing of poly-ubiquitin precursors as well as that of ubiquitinated proteins. Is involved in resistance to the arginine analog canavanine (CAN). The chain is Ubiquitin carboxyl-terminal hydrolase 1 (UBP1) from Arabidopsis thaliana (Mouse-ear cress).